The following is a 128-amino-acid chain: MAQVPAGKNRSGQLSKQTGDAWENQARRWLEGQGLRFIAANARERGGEIDLIMRDGTVTVFIEVRYRRSARYGDAAASVTPQKQQRLLKAARLWLCRQNGSFETVDCRFDVVAFTGNDIQWLKNAFGE.

The interval 1 to 20 is disordered; that stretch reads MAQVPAGKNRSGQLSKQTGD.

This sequence belongs to the UPF0102 family.

This Klebsiella pneumoniae subsp. pneumoniae (strain ATCC 700721 / MGH 78578) protein is UPF0102 protein KPN78578_35270.